We begin with the raw amino-acid sequence, 494 residues long: 4-trimethylaminobutyraldehyde dehydrogenase (494 aa).

Ser-2 carries the post-translational modification N-acetylserine. Lys-30 carries the N6-acetyllysine; alternate modification. Lys-30 carries the N6-succinyllysine; alternate modification. The residue at position 59 (Lys-59) is an N6-succinyllysine. NAD(+)-binding positions include Lys-180 and 232-236; that span reads GSVPT. Residue Glu-254 is the Proton acceptor of the active site. The active-site Nucleophile is Cys-288. N6-acetyllysine is present on residues Lys-298 and Lys-344. Glu-391 lines the NAD(+) pocket.

Belongs to the aldehyde dehydrogenase family. As to quaternary structure, homotetramer.

The protein resides in the cytoplasm. The protein localises to the cytosol. It carries out the reaction 4-(trimethylamino)butanal + NAD(+) + H2O = 4-(trimethylamino)butanoate + NADH + 2 H(+). The enzyme catalyses an aldehyde + NAD(+) + H2O = a carboxylate + NADH + 2 H(+). The catalysed reaction is 4-aminobutanal + NAD(+) + H2O = 4-aminobutanoate + NADH + 2 H(+). It catalyses the reaction formaldehyde + NAD(+) + H2O = formate + NADH + 2 H(+). It carries out the reaction acetaldehyde + NAD(+) + H2O = acetate + NADH + 2 H(+). The enzyme catalyses imidazole-4-acetaldehyde + NAD(+) + H2O = imidazole-4-acetate + NADH + 2 H(+). The catalysed reaction is acrolein + NAD(+) + H2O = acrylate + NADH + 2 H(+). It catalyses the reaction (5-hydroxyindol-3-yl)acetaldehyde + NAD(+) + H2O = (5-hydroxyindol-3-yl)acetate + NADH + 2 H(+). It carries out the reaction 3,4-dihydroxyphenylacetaldehyde + NAD(+) + H2O = 3,4-dihydroxyphenylacetate + NADH + 2 H(+). The enzyme catalyses spermine monoaldehyde + NAD(+) + H2O = N-(2-carboxyethyl)spermidine + NADH + 2 H(+). The catalysed reaction is propanal + NAD(+) + H2O = propanoate + NADH + 2 H(+). It catalyses the reaction butanal + NAD(+) + H2O = butanoate + NADH + 2 H(+). It carries out the reaction pentanal + NAD(+) + H2O = pentanoate + NADH + 2 H(+). The enzyme catalyses hexanal + NAD(+) + H2O = hexanoate + NADH + 2 H(+). It functions in the pathway amine and polyamine biosynthesis; carnitine biosynthesis. Its function is as follows. Converts gamma-trimethylaminobutyraldehyde into gamma-butyrobetaine with high efficiency (in vitro). Can catalyze the irreversible oxidation of a broad range of aldehydes to the corresponding acids in an NAD-dependent reaction, but with low efficiency. Catalyzes the oxidation of aldehydes arising from biogenic amines and polyamines. In Bos taurus (Bovine), this protein is 4-trimethylaminobutyraldehyde dehydrogenase (ALDH9A1).